The following is an 83-amino-acid chain: CDC42 small effector protein 2 (83 aa).

S-palmitoyl cysteine attachment occurs at residues Cys-10 and Cys-11. The region spanning 28–41 (IGEPTNFVHTAHVG) is the CRIB domain. A phosphoserine mark is found at Ser-42 and Ser-51.

It belongs to the CDC42SE/SPEC family. Interacts with CDC42 (in GTP-bound form). Interacts weakly with RAC1 and not at all with RHOA.

The protein localises to the cytoplasm. The protein resides in the cytoskeleton. Its subcellular location is the cell membrane. It is found in the cell projection. It localises to the phagocytic cup. In terms of biological role, probably involved in the organization of the actin cytoskeleton by acting downstream of CDC42, inducing actin filament assembly. Alters CDC42-induced cell shape changes. In activated T-cells, may play a role in CDC42-mediated F-actin accumulation at the immunological synapse. May play a role in early contractile events in phagocytosis in macrophages. The chain is CDC42 small effector protein 2 (Cdc42se2) from Rattus norvegicus (Rat).